The sequence spans 785 residues: Endonuclease MutS2 (785 aa).

ATP is bound at residue 335-342 (GPNTGGKT). The Smr domain occupies 710–785 (LDLRGERYED…GNGVTIVEFK (76 aa)).

The protein belongs to the DNA mismatch repair MutS family. MutS2 subfamily. In terms of assembly, homodimer. Binds to stalled ribosomes, contacting rRNA.

In terms of biological role, endonuclease that is involved in the suppression of homologous recombination and thus may have a key role in the control of bacterial genetic diversity. Its function is as follows. Acts as a ribosome collision sensor, splitting the ribosome into its 2 subunits. Detects stalled/collided 70S ribosomes which it binds and splits by an ATP-hydrolysis driven conformational change. Acts upstream of the ribosome quality control system (RQC), a ribosome-associated complex that mediates the extraction of incompletely synthesized nascent chains from stalled ribosomes and their subsequent degradation. Probably generates substrates for RQC. The protein is Endonuclease MutS2 of Listeria welshimeri serovar 6b (strain ATCC 35897 / DSM 20650 / CCUG 15529 / CIP 8149 / NCTC 11857 / SLCC 5334 / V8).